A 628-amino-acid polypeptide reads, in one-letter code: Putative pentatricopeptide repeat-containing protein At3g13770, mitochondrial (628 aa).

The N-terminal 19 residues, 1–19 (MFNLMRLIHRSFSSSPTNY), are a transit peptide targeting the mitochondrion. PPR repeat units follow at residues 51-85 (GFHGYDALLNACLDKRALRDGQRVHAHMIKTRYLP), 86-116 (ATYLRTRLLIFYGKCDCLEDARKVLDEMPEK), 117-151 (NVVSWTAMISRYSQTGHSSEALTVFAEMMRSDGKP), 152-186 (NEFTFATVLTSCIRASGLGLGKQIHGLIVKWNYDS), 187-217 (HIFVGSSLLDMYAKAGQIKEAREIFECLPER), 218-252 (DVVSCTAIIAGYAQLGLDEEALEMFHRLHSEGMSP), 253-287 (NYVTYASLLTALSGLALLDHGKQAHCHVLRRELPF), 288-318 (YAVLQNSLIDMYSKCGNLSYARRLFDNMPER), 319-353 (TAISWNAMLVGYSKHGLGREVLELFRLMRDEKRVK), 355-389 (DAVTLLAVLSGCSHGRMEDTGLNIFDGMVAGEYGT), and 392-422 (GTEHYGCIVDMLGRAGRIDEAFEFIKRMPSK). Residues 427 to 502 (VLGSLLGACR…EPGRSWIQHE (76 aa)) are type E motif. The type E(+) motif stretch occupies residues 503–533 (QTLHYFHANDRTHPRREEVLAKMKEISIKMK). The tract at residues 534–628 (QAGYVPDLSC…DGICSCGDYW (95 aa)) is type DYW motif.

The protein belongs to the PPR family. PCMP-H subfamily.

The protein localises to the mitochondrion. This Arabidopsis thaliana (Mouse-ear cress) protein is Putative pentatricopeptide repeat-containing protein At3g13770, mitochondrial (PCMP-H85).